A 398-amino-acid chain; its full sequence is Alpha-2,8-sialyltransferase 8F (398 aa).

At 1-3 (MRP) the chain is on the cytoplasmic side. A helical; Signal-anchor for type II membrane protein transmembrane segment spans residues 4–24 (GGALLALLASLLLLLLLRLLW). The Lumenal portion of the chain corresponds to 25–398 (CPADAPGRAR…KLQFSKCEVA (374 aa)). N-linked (GlcNAc...) asparagine glycosylation is found at Asn66, Asn93, Asn151, and Asn196. Intrachain disulfides connect Cys186/Cys335 and Cys200/Cys395. Substrate contacts are provided by residues Asn214, 236 to 238 (NPS), and 322 to 324 (STG). His370 acts as the Proton donor/acceptor in catalysis.

The protein belongs to the glycosyltransferase 29 family.

It localises to the golgi apparatus membrane. The catalysed reaction is a ganglioside GM3 + CMP-N-acetyl-beta-neuraminate = a ganglioside GD3 + CMP + H(+). It carries out the reaction a ganglioside GM3 (d18:1(4E)) + CMP-N-acetyl-beta-neuraminate = a ganglioside GD3 (d18:1(4E)) + CMP + H(+). The enzyme catalyses a ganglioside GD1a (d18:1(4E)) + CMP-N-acetyl-beta-neuraminate = a ganglioside GT1a (d18:1(4E)) + CMP + H(+). It catalyses the reaction a ganglioside GD1a + CMP-N-acetyl-beta-neuraminate = a ganglioside GT1a + CMP + H(+). The catalysed reaction is a ganglioside GM1b (d18:1(4E)) + CMP-N-acetyl-beta-neuraminate = a ganglioside GD1c (d18:1(4E)) + CMP + H(+). It carries out the reaction a ganglioside GM1b + CMP-N-acetyl-beta-neuraminate = a ganglioside GD1c + CMP + H(+). The enzyme catalyses a ganglioside GM4 (d18:1(4E)) + CMP-N-acetyl-beta-neuraminate = an N-acetyl-alpha-neuraminosyl-(2-&gt;8)-N-acetyl-alpha-neuraminosyl-(2-&gt;3)-beta-D-galactosyl-(1&lt;-&gt;1')-N-acylsphing-4-enine + CMP + H(+). It catalyses the reaction N-acetyl-alpha-neuraminosyl-(2-&gt;3)-beta-D-galactosyl-(1&lt;-&gt;1')-ceramide + CMP-N-acetyl-beta-neuraminate = N-acetyl-alpha-neuraminosyl-(2-&gt;8)-N-acetyl-alpha-neuraminosyl-(2-&gt;3)-beta-D-galactosyl-(1&lt;-&gt;1')-ceramide + CMP + H(+). The catalysed reaction is a ganglioside GT1b (d18:1(4E)) + CMP-N-acetyl-beta-neuraminate = a ganglioside GQ1b (d18:1(4E)) + CMP + H(+). It carries out the reaction a ganglioside GT1b + CMP-N-acetyl-beta-neuraminate = a ganglioside GQ1b + CMP + H(+). It participates in protein modification; protein glycosylation. Its function is as follows. Alpha-2,8-sialyltransferase that prefers O-glycans to N-glycans or glycolipids as acceptor substrates. The minimal acceptor substrate is the NeuAc-alpha-2,3(6)-Gal sequence at the non-reducing end of their carbohydrate groups. In Pan troglodytes (Chimpanzee), this protein is Alpha-2,8-sialyltransferase 8F (ST8SIA6).